Reading from the N-terminus, the 181-residue chain is ATP synthase subunit delta (181 aa).

Belongs to the ATPase delta chain family. F-type ATPases have 2 components, F(1) - the catalytic core - and F(0) - the membrane proton channel. F(1) has five subunits: alpha(3), beta(3), gamma(1), delta(1), epsilon(1). F(0) has three main subunits: a(1), b(2) and c(10-14). The alpha and beta chains form an alternating ring which encloses part of the gamma chain. F(1) is attached to F(0) by a central stalk formed by the gamma and epsilon chains, while a peripheral stalk is formed by the delta and b chains.

It localises to the cell inner membrane. Functionally, f(1)F(0) ATP synthase produces ATP from ADP in the presence of a proton or sodium gradient. F-type ATPases consist of two structural domains, F(1) containing the extramembraneous catalytic core and F(0) containing the membrane proton channel, linked together by a central stalk and a peripheral stalk. During catalysis, ATP synthesis in the catalytic domain of F(1) is coupled via a rotary mechanism of the central stalk subunits to proton translocation. In terms of biological role, this protein is part of the stalk that links CF(0) to CF(1). It either transmits conformational changes from CF(0) to CF(1) or is implicated in proton conduction. The protein is ATP synthase subunit delta of Chlorobium phaeobacteroides (strain DSM 266 / SMG 266 / 2430).